Here is an 807-residue protein sequence, read N- to C-terminus: Spondin-1 (807 aa).

An N-terminal signal peptide occupies residues 1 to 28 (MRLSPVLLRLSRGPALLALALPLAVALA). The 166-residue stretch at 29 to 194 (FSDETLDKVP…DSTFDGVTDK (166 aa)) folds into the Reelin domain. 17 disulfides stabilise this stretch: cysteine 44–cysteine 128, cysteine 156–cysteine 182, cysteine 199–cysteine 336, cysteine 200–cysteine 340, cysteine 202–cysteine 415, cysteine 443–cysteine 480, cysteine 454–cysteine 489, cysteine 459–cysteine 494, cysteine 502–cysteine 538, cysteine 513–cysteine 517, cysteine 548–cysteine 554, cysteine 559–cysteine 595, cysteine 570–cysteine 574, cysteine 605–cysteine 610, cysteine 615–cysteine 650, cysteine 626–cysteine 630, and cysteine 660–cysteine 665. One can recognise a Spondin domain in the interval 195 to 388 (PILDCCACGT…LTSLDHPQSP (194 aa)). An N-linked (GlcNAc...) asparagine glycan is attached at asparagine 214. Ca(2+) is bound by residues aspartate 325, aspartate 354, and aspartate 358. 6 TSP type-1 domains span residues 442 to 495 (TCIY…PGCS), 501 to 555 (TCTM…EECS), 558 to 611 (SCLT…PECH), 614 to 666 (PCLL…PECP), 668 to 721 (DCEL…RKCL), and 754 to 806 (GCRM…NVHP). N-linked (GlcNAc...) asparagine glycosylation is present at asparagine 681.

Binds to the central extracellular domain of APP and inhibits beta-secretase cleavage of APP.

The protein localises to the secreted. Its subcellular location is the extracellular space. It localises to the extracellular matrix. Its function is as follows. Cell adhesion protein that promotes the attachment of spinal cord and sensory neuron cells and the outgrowth of neurites in vitro. May contribute to the growth and guidance of axons in both the spinal cord and the PNS. Major factor for vascular smooth muscle cell. This is Spondin-1 (SPON1) from Bos taurus (Bovine).